The chain runs to 463 residues: Major capsid protein (463 aa).

The propeptide occupies 1–24; that stretch reads MTIEKNLSDVQQKYADQFQEDVVK.

Its subcellular location is the virion. Assembles to form an icosahedral capsid. This Staphylococcus phage K protein is Major capsid protein.